The primary structure comprises 676 residues: Hemin receptor (676 aa).

An N-terminal signal peptide occupies residues 1-28 (MLRSTSDRFRWSSLSLAIACTLPLATQA). A TonB box motif is present at residues 44-51 (DTMVVTAT). Positions 56–167 (SSFEAPMMVT…LGGVIAYETV (112 aa)) constitute a TBDR plug domain. The TBDR beta-barrel domain occupies 178–676 (NSGYRVYSSA…NVKFFVSYQW (499 aa)). The short motif at 659–676 (QGIPQDGRNVKFFVSYQW) is the TonB C-terminal box element.

Belongs to the TonB-dependent receptor family.

The protein resides in the cell outer membrane. Its function is as follows. This protein is involved in the initial step of iron uptake by binding hemin, an iron chelatin siderophore that allows the bacteria to extract iron from the environment. The chain is Hemin receptor (hmuR) from Yersinia pestis.